Reading from the N-terminus, the 183-residue chain is Probable actin-related protein 2/3 complex subunit 3 (183 aa).

The protein belongs to the ARPC3 family. Component of the Arp2/3 complex.

Its subcellular location is the cytoplasm. It is found in the cytoskeleton. Functionally, functions as a component of the Arp2/3 complex which is involved in regulation of actin polymerization and together with an activating nucleation-promoting factor (NPF) mediates the formation of branched actin networks. This Caenorhabditis elegans protein is Probable actin-related protein 2/3 complex subunit 3 (arx-5).